The following is a 446-amino-acid chain: Tubulin beta-2 chain (446 aa).

Residues Q11, E69, S138, G142, T143, G144, N204, and N226 each contribute to the GTP site. E69 provides a ligand contact to Mg(2+). The segment at 426–446 (QEAGIDEEEEYEEEAPAEHEE) is disordered. Acidic residues predominate over residues 429 to 440 (GIDEEEEYEEEA).

This sequence belongs to the tubulin family. In terms of assembly, dimer of alpha and beta chains. A typical microtubule is a hollow water-filled tube with an outer diameter of 25 nm and an inner diameter of 15 nM. Alpha-beta heterodimers associate head-to-tail to form protofilaments running lengthwise along the microtubule wall with the beta-tubulin subunit facing the microtubule plus end conferring a structural polarity. Microtubules usually have 13 protofilaments but different protofilament numbers can be found in some organisms and specialized cells. Requires Mg(2+) as cofactor.

It is found in the cytoplasm. Its subcellular location is the cytoskeleton. Functionally, tubulin is the major constituent of microtubules, a cylinder consisting of laterally associated linear protofilaments composed of alpha- and beta-tubulin heterodimers. Microtubules grow by the addition of GTP-tubulin dimers to the microtubule end, where a stabilizing cap forms. Below the cap, tubulin dimers are in GDP-bound state, owing to GTPase activity of alpha-tubulin. The chain is Tubulin beta-2 chain from Hypocrea virens (Gliocladium virens).